Reading from the N-terminus, the 380-residue chain is Glutamate 5-kinase (380 aa).

Residue K20 participates in ATP binding. The substrate site is built by S59, D146, and N158. 220–226 (TGGMYSK) serves as a coordination point for ATP. One can recognise a PUA domain in the interval 285–363 (SGTVTVDEGA…HEVAAILGDA (79 aa)).

It belongs to the glutamate 5-kinase family.

The protein resides in the cytoplasm. The catalysed reaction is L-glutamate + ATP = L-glutamyl 5-phosphate + ADP. It functions in the pathway amino-acid biosynthesis; L-proline biosynthesis; L-glutamate 5-semialdehyde from L-glutamate: step 1/2. Functionally, catalyzes the transfer of a phosphate group to glutamate to form L-glutamate 5-phosphate. The sequence is that of Glutamate 5-kinase from Nitratidesulfovibrio vulgaris (strain ATCC 29579 / DSM 644 / CCUG 34227 / NCIMB 8303 / VKM B-1760 / Hildenborough) (Desulfovibrio vulgaris).